The chain runs to 924 residues: Autophagy-related protein 9B (924 aa).

The tract at residues 1-144 (MVSRMGWGGR…QDSPGLRVGP (144 aa)) is disordered. The Cytoplasmic segment spans residues 1-207 (MVSRMGWGGR…KIYSYHQRNG (207 aa)). Over residues 17–27 (WGDLGPGSVPL) the composition is skewed to low complexity. The segment covering 28 to 40 (LPMPLPPPPPPSC) has biased composition (pro residues). The segment covering 78–88 (LQGTGASQSCH) has biased composition (polar residues). Over residues 98-113 (PTQAQPAMTPASASPS) the composition is skewed to low complexity. The Tyrosine-based sorting signal motif lies at 151-154 (YERL). A helical membrane pass occupies residues 208–228 (FACILLEDVFQLGQFIFIVTF). At 229-276 (TTFLLRCVDYNVLFANQPSNHTRPGPFHSKVTLSDAILPSAQCAERIR) the chain is on the lumenal side. A helical transmembrane segment spans residues 277-297 (SSPLLVLLLVLAAGFWLVQLL). At 298-438 (RSVCNLFSYW…GALAARWGRT (141 aa)) the chain is on the cytoplasmic side. Residues 439 to 459 (VLLLAALNLALSPLVLAWQVL) lie within the membrane without spanning it. Residues 460 to 526 (HVFYSHVELL…AAPPAPLRTL (67 aa)) lie on the Cytoplasmic side of the membrane. A helical transmembrane segment spans residues 527–547 (LARQLVFFAGALFAALLVLTV). Residues 548 to 551 (YDED) lie on the Lumenal side of the membrane. The chain crosses the membrane as a helical span at residues 552–572 (VLAVEHVLTAMTALGVTATVA). The Cytoplasmic portion of the chain corresponds to 573 to 624 (RSFIPEEQCQGRAPQLLLQTALAHMHYLPEEPGPGGRDRAYRQMAQLLQYRA). The stretch at 625–645 (VSLLEELLSPLLTPLFLLFWF) is an intramembrane region. Residues 646-924 (RPRALEIIDF…KEPDRASCTD (279 aa)) lie on the Cytoplasmic side of the membrane. The disordered stretch occupies residues 847 to 924 (QQEPWGEAAA…KEPDRASCTD (78 aa)). Residues 878-890 (SWSSDGSSPASSP) show a composition bias toward low complexity. Basic and acidic residues predominate over residues 913 to 924 (TQKEPDRASCTD).

It belongs to the ATG9 family. As to quaternary structure, homotrimer; forms a homotrimer with a central pore that forms a path between the two membrane leaflets. In terms of tissue distribution, highly expressed in placenta (trophoblast cells) and pituitary gland. Not expressed in vascular endothelial.

Its subcellular location is the preautophagosomal structure membrane. It catalyses the reaction a 1,2-diacyl-sn-glycero-3-phosphocholine(in) = a 1,2-diacyl-sn-glycero-3-phosphocholine(out). It carries out the reaction a 1,2-diacyl-sn-glycero-3-phospho-L-serine(in) = a 1,2-diacyl-sn-glycero-3-phospho-L-serine(out). The catalysed reaction is a 1,2-diacyl-sn-glycero-3-phosphoethanolamine(in) = a 1,2-diacyl-sn-glycero-3-phosphoethanolamine(out). Phospholipid scramblase involved in autophagy by mediating autophagosomal membrane expansion. Cycles between the preautophagosomal structure/phagophore assembly site (PAS) and the cytoplasmic vesicle pool and supplies membrane for the growing autophagosome. Lipid scramblase activity plays a key role in preautophagosomal structure/phagophore assembly by distributing the phospholipids that arrive through ATG2 (ATG2A or ATG2B) from the cytoplasmic to the luminal leaflet of the bilayer, thereby driving autophagosomal membrane expansion. In addition to autophagy, also plays a role in necrotic cell death. The chain is Autophagy-related protein 9B (ATG9B) from Homo sapiens (Human).